Reading from the N-terminus, the 252-residue chain is MQLTRCCFVFLVQGSLYLVICGQDDGPPGSEDPERDDHEGQPRPRVPRKRGHISPKSRPMANSTLLGLLAPPGEAWGILGQPPNRPNHSPPPSAKVKKIFGWGDFYSNIKTVALNLLVTGKIVDHGNGTFSVHFQHNATGQGNISISLVPPSKAVEFHQEQQIFIEAKASKIFNCRMEWEKVERGRRTSLCTHDPAKICSRDHAQSSATWSCSQPFKVVCVYIAFYSTDYRLVQKVCPDYNYHSDTPYYPSG.

Residues 1–22 (MQLTRCCFVFLVQGSLYLVICG) form the signal peptide. Positions 23-75 (QDDGPPGSEDPERDDHEGQPRPRVPRKRGHISPKSRPMANSTLLGLLAPPGEA) are II. The segment at 27 to 58 (PPGSEDPERDDHEGQPRPRVPRKRGHISPKSR) is disordered. Basic residues predominate over residues 45–55 (RVPRKRGHISP). N-linked (GlcNAc...) asparagine glycosylation is found at Asn-62, Asn-127, Asn-137, and Asn-143. The III stretch occupies residues 76 to 157 (WGILGQPPNR…LVPPSKAVEF (82 aa)). Residues 158–166 (HQEQQIFIE) are IV (linker domain). The segment at 167 to 252 (AKASKIFNCR…HSDTPYYPSG (86 aa)) is v (Cys-rich).

It belongs to the neurexophilin family. In terms of processing, may be proteolytically processed at the boundary between the N-terminal non-conserved and the central conserved domain in neuron-like cells. In terms of tissue distribution, highest level in brain.

It is found in the secreted. In terms of biological role, may be signaling molecules that resemble neuropeptides. Ligand for alpha-neurexins. This Homo sapiens (Human) protein is Neurexophilin-3 (NXPH3).